The sequence spans 359 residues: Zinc finger CCCH domain-containing protein 20 (359 aa).

3 consecutive C3H1-type zinc fingers follow at residues 75 to 107, 119 to 145, and 153 to 177; these read TCDHFRMYEFKVRRCARGRSHDWTECPYAHPGE, YSGTACPEFRKGCCKRGDACEFSHGVF, and RYRTQPCKDGGNCRRRVCFFAHSPD. 2 disordered regions span residues 207–226 and 334–359; these read SISPSSNSPPVSPRGDSDSS and MGRIEPDPDQGAGDTPDVGWVSDLVM.

In Arabidopsis thaliana (Mouse-ear cress), this protein is Zinc finger CCCH domain-containing protein 20.